The sequence spans 470 residues: 6-phosphofructo-2-kinase/fructose-2,6-bisphosphatase (470 aa).

The segment at Met1 to Thr249 is 6-phosphofructo-2-kinase. Position 31 is a phosphoserine; by PKA (Ser31). Gly47 to Tyr55 is an ATP binding site. The beta-D-fructose 6-phosphate site is built by Arg80 and Arg104. Asp130 is a catalytic residue. Beta-D-fructose 6-phosphate-binding residues include Thr132 and Arg138. Residue Cys160 is part of the active site. Asn169–Lys174 is an ATP binding site. Beta-D-fructose 6-phosphate contacts are provided by Lys174, Arg195, and Tyr199. The fructose-2,6-bisphosphatase stretch occupies residues Pro250–Phe470. Arg257 is a beta-D-fructose 2,6-bisphosphate binding site. The active-site Tele-phosphohistidine intermediate is the His258. Residues Asn264 and Gly270 each contribute to the beta-D-fructose 2,6-bisphosphate site. Catalysis depends on Glu327, which acts as the Proton donor/acceptor. Residues Tyr338, Arg352, Lys356, Tyr367, Gln393, and Arg397 each contribute to the beta-D-fructose 2,6-bisphosphate site. Residue Phe349–Arg352 coordinates ATP. ATP-binding positions include Gln393–Arg397 and Tyr429.

The protein in the C-terminal section; belongs to the phosphoglycerate mutase family. As to quaternary structure, homodimer.

The catalysed reaction is beta-D-fructose 2,6-bisphosphate + H2O = beta-D-fructose 6-phosphate + phosphate. It carries out the reaction beta-D-fructose 6-phosphate + ATP = beta-D-fructose 2,6-bisphosphate + ADP + H(+). With respect to regulation, phosphorylation results in inhibition of the kinase activity. Functionally, synthesis and degradation of fructose 2,6-bisphosphate. The polypeptide is 6-phosphofructo-2-kinase/fructose-2,6-bisphosphatase (Aquarana catesbeiana (American bullfrog)).